The following is a 2153-amino-acid chain: MGAQVSRQNNGTHENGVTASNGSVIKYFNINYYKDSASSGLSRQDFSQDPSKFTQPLVDTLTNPALMSPSVEACGYSDRLKQITIGNSTITTQDSLHTVLAYGEWPTYLSDIDATSVDKPTHPETSADRFYTLDSVEWQVGSHGWWWKLPDALKDMGVFGQNMYYHSMGRSGFIIHTQCNATKFHSGALIVAVIPEHQLAYVGGVKVNVGYDHTHPGQSGHQIRGPSQSNDRSGGKPDEDPLFNCNGTLLGNITIFPHQIINLRTNNSSTIVVPYINCVPMDNMLKHNNLSLVIIPLVPLRPGSSGINSVPITVTIAPYKSEFSGAMEAQRQGLPTRLPSGSQQFMTTEDEQSPNILPGFHPSKKIHIPGMITNVMHMARVDSFIPINNIQGEVGKVSMYYITVTKKTVTERILVLPLEMSNTLFATTLLGEVLNYYANWSGSITITFMCVCDAFSTGKFLVAYTPPGGKLPEDRKQAMLGVHIIWDLGLQSSCTIVVPWISSGFYRRTKADSFTHGGYVSLWYQTAFVPPVSGGTGSILATCSACPDMSVRMLRDSPMMEQKNELQNNDDPVENFVESTLKEVLVVPDTKPSGPQHTTKPSILGAMEIGASSNATPESTIETRYVYNTNTNAEADVEMFLGRSALWGKVTLTRQYAKWEINFQEQAHIRKKFEFFTYLRFDMEVTIVTNNTGLMQIMFVPPGIDHPETHDDRKWDSASNPSVFFQPKSGFPRFTIPFTGLASAYYMFYDGYDKPKGSDNNEYGIAPTNDMGLLCFRTLDNSGGNDVKIYVKPKHITAWVPRPPRATQYTHKYSTNYHYKPNSSGPDEHVLKDRHFIKTRPLISSAGPSDMFVHTRDAIYKCAHLTNPTDETILLALTADLQVDSTNVPGPDVIPCCDCTAGCYYSRSKDRYFPVECVSHDWYEIQESGYYPKHIQYNLLIGEGHCEPGDCGGKLLCKHGVIGMITAGGDNHVAFTDLRPYSSLSEHQGVISDYFTQLGNAFGEGFTTNIQDHFSQITKSISDKFTSKAIKWLVRIISALTIMIRNNSDLPTILATLSLLGCSSSPWSFLKDKICSWLQIQRPASKQSDSWLRKFTECCNAAKGLEWISIKIGKFIDWLKGKLVPAVQRKRDTLDRCKKISLLEEQVNGFSSASSEAQQQLIVEVDTLKKGLDELAPLYASENKRVTKIQKDLKQLSAYLKNHRHEPVCLLLHGNPGCGKSLVTTIIARGLTQEAQVYSLPPDPKYFDGYDQQQVVILDDLGQNPDGKDLSTFCQMVSTTDFIVPMASLEDKGKSFTSQYVLASTNLDTLSPPTVTIPEAIKRRFFLDADLITTSKFRNTTGLLDVAKALQPCTGCPKPAHYKTCCPLLCGKAVVVQDRKTKANFSVNTIVEQLRHENATRKKVKHNLDAIFQGLGDSETPGFIVDLLSSSKDPKVIEYCAEQGWIGKANSTIERDFNYVHYMLNCLGSLIIILGTVYALYKLMCMTQGPYTGLPNPQTKRPELRKATLQGPEHEFVRALIKRNCHVITTSKGEFNMLGIHDNCAVVPTHAECGDSVTIDGREVRVLKQCILTDTNDTDTEITLLWLDQNEKFRDIRRFIPEHQREWSNMHLATNVTKFPMLDVEVGTVIPYGEVNLSGNPTCRLLKYNYPTKPGQCGGVIANTGNIVAIHVGGNGRVGYGAALLRKYFAQSQGEITAKHDVREKGLPQINTPNKTKLQPSVFYDVFPGVKEPAALSNGDPRLEVDLSTSVLSKYKGNTQVEWNDNIQIAVDHYSAQLYMLDINPQPLTMEQAVYGIEHLEPLDLTTSAGFPYVTMGIKKKDIVNKVTKDVTKLQEMIDKYGIDLPYVTYLKDELRAPEKIKKGKTRAIEAASINDTTHFRMVFGNLFSVFHANPGVLTGSAVGCNPDVFWSQMYACMDGELLAFDYTNYDGSLHPIWFKALGKVLDNLGFPGHLVNRLCNTTHIFKNLIYTVEGGMPSGICGTSIFNTMINNIIIRVLVLETYKNIDLDKLKIIAYGDDVVVSYPFELDPMEIANKAVRYGLTITPPDKGSTFHKIDWTNVTFLKRHFKPDTKYKFLIHPVYKMEDIYESIRWTKDPKNTQDHVHSLCLLAWHNGEEVYEKFREKIRSTSVGKVLYTPPYSLLYRQWIDQFI.

G2 carries N-myristoyl glycine; by host lipidation. Positions 213–240 (HTHPGQSGHQIRGPSQSNDRSGGKPDED) are disordered. Residues 216 to 232 (PGQSGHQIRGPSQSNDR) show a composition bias toward polar residues. The amphipathic alpha-helix stretch occupies residues 565-584 (ELQNNDDPVENFVESTLKEV). Catalysis depends on for protease 2A activity residues H864 and D880. C897 and C899 together coordinate Zn(2+). C951 acts as the For protease 2A activity in catalysis. C957 and H959 together coordinate Zn(2+). Residues 1088 to 1158 (SDSWLRKFTE…GFSSASSEAQ (71 aa)) form a membrane-binding region. An oligomerization region spans residues 1088-1224 (SDSWLRKFTE…NPGCGKSLVT (137 aa)). Residues 1109–1113 (SIKIG) are RNA-binding. The SF3 helicase domain maps to 1187–1346 (TKIQKDLKQL…FRNTTGLLDV (160 aa)). 1214–1221 (GNPGCGKS) provides a ligand contact to ATP. The Zn(2+) site is built by C1353, C1365, and C1370. Residues 1353–1370 (CTGCPKPAHYKTCCPLLC) form a C4-type; degenerate zinc finger. The tract at residues 1397–1404 (ENATRKKV) is RNA-binding. Positions 1408–1413 (LDAIFQ) are oligomerization. The stretch at 1460-1480 (VHYMLNCLGSLIIILGTVYAL) is an intramembrane region. An O-(5'-phospho-RNA)-tyrosine modification is found at Y1491. In terms of domain architecture, Peptidase C3 spans 1511–1689 (GPEHEFVRAL…YGAALLRKYF (179 aa)). Residues H1550, E1581, and C1657 each act as for protease 3C activity in the active site. Residues 1920 to 2033 (GELLAFDYTN…SYPFELDPME (114 aa)) enclose the RdRp catalytic domain. Mg(2+) is bound by residues D1926 and D2019.

It belongs to the picornaviruses polyprotein family. In terms of assembly, interacts with capsid protein VP1 and capsid protein VP3 to form heterotrimeric protomers. As to quaternary structure, interacts with capsid protein VP0, and capsid protein VP3 to form heterotrimeric protomers. Five protomers subsequently associate to form pentamers which serve as building blocks for the capsid. Interacts with capsid protein VP2, capsid protein VP3 and capsid protein VP4 following cleavage of capsid protein VP0. Interacts (via C-terminus) with capsid protein VP4 (via C-terminus). Interacts with host CDHR3 (via N-terminus); this interaction occurs near each threefold vertex of the capsid and allows the virus attachment and entry into the host cell. Interacts with capsid protein VP1 and capsid protein VP3 in the mature capsid. Interacts with host CDHR3 (via N-terminus); this interaction occurs near each threefold vertex of the capsid and allows the virus attachment and entry into the host cell. In terms of assembly, interacts with capsid protein VP0 and capsid protein VP1 to form heterotrimeric protomers. Five protomers subsequently associate to form pentamers which serve as building blocks for the capsid. Interacts with capsid protein VP4 in the mature capsid. Interacts with protein 2C; this interaction may be important for virion morphogenesis. Interacts with host CDHR3 (via N-terminus); this interaction occurs near each threefold vertex of the capsid and allows the virus attachment and entry into the host cell. As to quaternary structure, interacts (via C-terminus) with capsid protein VP1 (via C-terminus). Interacts with capsid protein VP3. Homodimer. In terms of assembly, homohexamer; forms a hexameric ring structure with 6-fold symmetry characteristic of AAA+ ATPases. Interacts (via N-terminus) with host RTN3 (via reticulon domain); this interaction is important for viral replication. Interacts with capsid protein VP3; this interaction may be important for virion morphogenesis. As to quaternary structure, interacts with protein 3CD. Homodimer. Interacts with host GBF1. Interacts (via GOLD domain) with host ACBD3 (via GOLD domain); this interaction allows the formation of a viral protein 3A/ACBD3 heterotetramer with a 2:2 stoichiometry, which will stimulate the recruitment of host PI4KB in order to synthesize PI4P at the viral RNA replication sites. In terms of assembly, interacts with RNA-directed RNA polymerase. As to quaternary structure, interacts with protein 3AB and with RNA-directed RNA polymerase. Interacts with Viral protein genome-linked and with protein 3CD. The cofactor is Mg(2+). In terms of processing, specific enzymatic cleavages in vivo by the viral proteases yield processing intermediates and the mature proteins. Post-translationally, myristoylation is required for the formation of pentamers during virus assembly. Further assembly of 12 pentamers and a molecule of genomic RNA generates the provirion. During virion maturation, immature virions are rendered infectious following cleavage of VP0 into VP4 and VP2. This maturation seems to be an autocatalytic event triggered by the presence of RNA in the capsid and it is followed by a conformational change infectious virion. In terms of processing, myristoylation is required during RNA encapsidation and formation of the mature virus particle. Post-translationally, VPg is uridylylated by the polymerase into VPg-pUpU. This acts as a nucleotide-peptide primer for the genomic RNA replication.

It localises to the virion. The protein localises to the host cytoplasm. The protein resides in the host cytoplasmic vesicle membrane. Its subcellular location is the host nucleus. It carries out the reaction a ribonucleoside 5'-triphosphate + H2O = a ribonucleoside 5'-diphosphate + phosphate + H(+). The catalysed reaction is Selective cleavage of Gln-|-Gly bond in the poliovirus polyprotein. In other picornavirus reactions Glu may be substituted for Gln, and Ser or Thr for Gly.. It catalyses the reaction Selective cleavage of Tyr-|-Gly bond in the picornavirus polyprotein.. The enzyme catalyses RNA(n) + a ribonucleoside 5'-triphosphate = RNA(n+1) + diphosphate. Replication or transcription is subject to high level of random mutations by the nucleotide analog ribavirin. Functionally, forms an icosahedral capsid of pseudo T=3 symmetry with capsid proteins VP2 and VP3. The capsid is 300 Angstroms in diameter, composed of 60 copies of each capsid protein and enclosing the viral positive strand RNA genome. Capsid protein VP1 mainly forms the vertices of the capsid. The VP1 C-termini form 60 dominant spike-like protrusions on the surface of the virion. Capsid protein VP1 interacts with host cell receptor CDHR3 to provide virion attachment to target host cells. This attachment induces virion internalization. Tyrosine kinases are probably involved in the entry process. After binding to its receptor, the capsid undergoes conformational changes. Capsid protein VP1 N-terminus (that contains an amphipathic alpha-helix) and capsid protein VP4 are externalized. Together, they shape a pore in the host membrane through which viral genome is translocated to host cell cytoplasm. In terms of biological role, forms an icosahedral capsid of pseudo T=3 symmetry with capsid proteins VP2 and VP3. The capsid is 300 Angstroms in diameter, composed of 60 copies of each capsid protein and enclosing the viral positive strand RNA genome. Its function is as follows. Lies on the inner surface of the capsid shell. After binding to the host receptor, the capsid undergoes conformational changes. Capsid protein VP4 is released, Capsid protein VP1 N-terminus is externalized, and together, they shape a pore in the host membrane through which the viral genome is translocated into the host cell cytoplasm. Component of immature procapsids, which is cleaved into capsid proteins VP4 and VP2 after maturation. Allows the capsid to remain inactive before the maturation step. Functionally, cysteine protease that cleaves viral polyprotein and specific host proteins. It is responsible for the autocatalytic cleavage between the P1 and P2 regions, which is the first cleavage occurring in the polyprotein. Also cleaves the host translation initiation factor EIF4G1, in order to shut down the capped cellular mRNA translation. Inhibits the host nucleus-cytoplasm protein and RNA trafficking by cleaving host members of the nuclear pores. Counteracts stress granule formation probably by antagonizing its assembly or promoting its dissassembly. In terms of biological role, plays an essential role in the virus replication cycle by acting as a viroporin. Creates a pore in the host endoplasmic reticulum and as a consequence releases Ca2+ in the cytoplasm of infected cell. In turn, high levels of cytoplasmic calcium may trigger membrane trafficking and transport of viral ER-associated proteins to viroplasms, sites of viral genome replication. Its function is as follows. Induces and associates with structural rearrangements of intracellular membranes. Displays RNA-binding, nucleotide binding and NTPase activities. May play a role in virion morphogenesis and viral RNA encapsidation by interacting with the capsid protein VP3. Localizes the viral replication complex to the surface of membranous vesicles. Together with protein 3CD binds the Cis-Active RNA Element (CRE) which is involved in RNA synthesis initiation. Acts as a cofactor to stimulate the activity of 3D polymerase, maybe through a nucleid acid chaperone activity. Functionally, localizes the viral replication complex to the surface of membranous vesicles. It inhibits host cell endoplasmic reticulum-to-Golgi apparatus transport and causes the disassembly of the Golgi complex, possibly through GBF1 interaction. This would result in depletion of MHC, trail receptors and IFN receptors at the host cell surface. Plays an essential role in viral RNA replication by recruiting ACBD3 and PI4KB at the viral replication sites, thereby allowing the formation of the rearranged membranous structures where viral replication takes place. In terms of biological role, acts as a primer for viral RNA replication and remains covalently bound to viral genomic RNA. VPg is uridylylated prior to priming replication into VPg-pUpU. The oriI viral genomic sequence may act as a template for this. The VPg-pUpU is then used as primer on the genomic RNA poly(A) by the RNA-dependent RNA polymerase to replicate the viral genome. During genome replication, the VPg-RNA linkage is removed by the host TDP2, thereby accelerating replication. During the late stage of the replication cycle, host TDP2 is excluded from sites of viral RNA synthesis and encapsidation, allowing for the generation of progeny virions. Its function is as follows. Involved in the viral replication complex and viral polypeptide maturation. It exhibits protease activity with a specificity and catalytic efficiency that is different from protease 3C. Protein 3CD lacks polymerase activity. Protein 3CD binds to the 5'UTR of the viral genome. Major viral protease that mediates proteolytic processing of the polyprotein. Cleaves host EIF5B, contributing to host translation shutoff. Also cleaves host PABPC1, contributing to host translation shutoff. Functionally, replicates the viral genomic RNA on the surface of intracellular membranes. May form linear arrays of subunits that propagate along a strong head-to-tail interaction called interface-I. Covalently attaches UMP to a tyrosine of VPg, which is used to prime RNA synthesis. The positive stranded RNA genome is first replicated at virus induced membranous vesicles, creating a dsRNA genomic replication form. This dsRNA is then used as template to synthesize positive stranded RNA genomes. ss(+)RNA genomes are either translated, replicated or encapsidated. The protein is Genome polyprotein of Homo sapiens (Human).